Here is a 410-residue protein sequence, read N- to C-terminus: MNNGINVNSEIGKLKSVLLHRPGAEVENITPDTMKQLLFDDIPYLKIAQKEHDFFAQTLRDNGAETVYIENLATEVFEKSSETKEEFLSHLLHEAGYRPGRTYDGLTEYLTSMPTKDMVEKVYAGVRKNELDIKRTALSDMAGSDAENYFYLNPLPNAYFTRDPQASMGVGMTINKMTFPARQPESLITEYVMANHPRFKDTPIWRDRNHTTRIEGGDELILNKTTVAIGVSERTSSKTIQNLAKELFANPLSTFDTVLAVEIPHNHAMMHLDTVFTMINHDQFTVFPGIMDGAGNINVFILRPGQDGEVEIEHLTDLKAALKKVLNLSELDLIECGAGDPIAAPREQWNDGSNTLAIAPGEIVTYDRNYVTVELLKEHGIKVHEILSSELGRGRGGARCMSQPLWREDL.

Cysteine 400 serves as the catalytic Amidino-cysteine intermediate.

It belongs to the arginine deiminase family.

It localises to the cytoplasm. It catalyses the reaction L-arginine + H2O = L-citrulline + NH4(+). It functions in the pathway amino-acid degradation; L-arginine degradation via ADI pathway; carbamoyl phosphate from L-arginine: step 1/2. The chain is Arginine deiminase from Lactococcus lactis subsp. cremoris (strain MG1363).